The following is a 370-amino-acid chain: Aminomethyltransferase (370 aa).

This sequence belongs to the GcvT family. In terms of assembly, the glycine cleavage system is composed of four proteins: P, T, L and H.

It catalyses the reaction N(6)-[(R)-S(8)-aminomethyldihydrolipoyl]-L-lysyl-[protein] + (6S)-5,6,7,8-tetrahydrofolate = N(6)-[(R)-dihydrolipoyl]-L-lysyl-[protein] + (6R)-5,10-methylene-5,6,7,8-tetrahydrofolate + NH4(+). In terms of biological role, the glycine cleavage system catalyzes the degradation of glycine. The protein is Aminomethyltransferase of Clostridium botulinum (strain Kyoto / Type A2).